The primary structure comprises 1058 residues: DNA primase (1058 aa).

The segment at 988–1028 adopts a CHC2-type zinc-finger fold; it reads CLRFKHGRASRATARTFVALSVGANNRLCVSLCQQCFAAKC.

Belongs to the herpesviridae DNA primase family. In terms of assembly, associates with the helicase and the primase-associated factor to form the helicase-primase factor.

It is found in the host nucleus. Its function is as follows. Essential component of the helicase/primase complex. Unwinds the DNA at the replication forks and generates single-stranded DNA for both leading and lagging strand synthesis. The primase initiates primer synthesis and thereby produces large amount of short RNA primers on the lagging strand that the polymerase elongates using dNTPs. The polypeptide is DNA primase (Homo sapiens (Human)).